A 291-amino-acid polypeptide reads, in one-letter code: Asialoglycoprotein receptor 1 (291 aa).

The segment covering 1 to 19 has biased composition (basic and acidic residues); it reads MTKECQDLQHLDNEESDHH. A disordered region spans residues 1–27; that stretch reads MTKECQDLQHLDNEESDHHQLRKGPPP. The Cytoplasmic segment spans residues 1-40; the sequence is MTKECQDLQHLDNEESDHHQLRKGPPPSQPLLQRLCSGPR. The short motif at 5–8 is the Endocytosis signal element; the sequence is CQDL. Serine 16 is subject to Phosphoserine. The S-palmitoyl cysteine moiety is linked to residue cysteine 36. Residues 41–61 traverse the membrane as a helical; Signal-anchor for type II membrane protein segment; sequence LLLLSLGLSLLLLVVVCVIGS. Positions 61-123 form a coiled coil; it reads SQNSQLQKEL…KDLSEDHSSL (63 aa). Over 62–291 the chain is Extracellular; the sequence is QNSQLQKELR…DKASQEPPLL (230 aa). N-linked (GlcNAc...) asparagine glycosylation is found at asparagine 79 and asparagine 147. Intrachain disulfides connect cysteine 154/cysteine 165, cysteine 182/cysteine 277, and cysteine 255/cysteine 269. Positions 161-278 constitute a C-type lectin domain; sequence HERSCYWFSR…CQRPYRWVCE (118 aa). Positions 191, 197, 216, 240, 242, 243, 253, 254, 265, 266, and 278 each coordinate Ca(2+). At serine 285 the chain carries Phosphoserine.

Interacts with LASS2. Post-translationally, phosphorylated on a cytoplasmic Ser residue.

The protein localises to the membrane. Mediates the endocytosis of plasma glycoproteins to which the terminal sialic acid residue on their complex carbohydrate moieties has been removed. The receptor recognizes terminal galactose and N-acetylgalactosamine units. After ligand binding to the receptor, the resulting complex is internalized and transported to a sorting organelle, where receptor and ligand are disassociated. The receptor then returns to the cell membrane surface. The sequence is that of Asialoglycoprotein receptor 1 (ASGR1) from Pongo abelii (Sumatran orangutan).